The primary structure comprises 110 residues: Large ribosomal subunit protein uL22 (110 aa).

This sequence belongs to the universal ribosomal protein uL22 family. In terms of assembly, part of the 50S ribosomal subunit.

This protein binds specifically to 23S rRNA; its binding is stimulated by other ribosomal proteins, e.g. L4, L17, and L20. It is important during the early stages of 50S assembly. It makes multiple contacts with different domains of the 23S rRNA in the assembled 50S subunit and ribosome. Its function is as follows. The globular domain of the protein is located near the polypeptide exit tunnel on the outside of the subunit, while an extended beta-hairpin is found that lines the wall of the exit tunnel in the center of the 70S ribosome. The sequence is that of Large ribosomal subunit protein uL22 from Cellvibrio japonicus (strain Ueda107) (Pseudomonas fluorescens subsp. cellulosa).